Consider the following 395-residue polypeptide: uncharacterized protein (395 aa).

The disordered stretch occupies residues 247 to 270; that stretch reads GGTVVPPNPDQPNPTPPDSSSPNY. The span at 252–265 shows a compositional bias: pro residues; the sequence is PPNPDQPNPTPPDS.

This is an uncharacterized protein from Vibrio cholerae serotype O1 (strain ATCC 39315 / El Tor Inaba N16961).